Consider the following 92-residue polypeptide: Progonadoliberin-1 (92 aa).

The signal sequence occupies residues 1 to 23; that stretch reads MEKSRKILVGVLLFTASVAICLA. Pyrrolidone carboxylic acid is present on Gln-24. Gly-33 is modified (glycine amide).

The protein belongs to the GnRH family.

It is found in the secreted. In terms of biological role, stimulates the secretion of gonadotropins. The chain is Progonadoliberin-1 (GNRH1) from Gallus gallus (Chicken).